The sequence spans 508 residues: uncharacterized protein (508 aa).

The next 12 helical transmembrane spans lie at 65–87 (IFPV…SYAV), 104–124 (WSGT…SLLL), 136–156 (FLVI…PGFI), 160–180 (VLLG…TAQW), 192–212 (VWVA…YGLA), 224–244 (LIFI…LAVV), 292–312 (TWIM…IGTF), 333–353 (LPAG…SLFI), 357–377 (MVLA…LSFA), 384–404 (LAGY…FAII), 416–436 (TVGV…PQTF), and 450–470 (TMVG…YVNW).

The protein belongs to the major facilitator superfamily. Allantoate permease family.

Its subcellular location is the endoplasmic reticulum. It is found in the golgi apparatus. It localises to the membrane. This is an uncharacterized protein from Schizosaccharomyces pombe (strain 972 / ATCC 24843) (Fission yeast).